Consider the following 317-residue polypeptide: NAC domain-containing protein 55 (317 aa).

Positions 14-162 constitute an NAC domain; sequence LPPGFRFYPT…DWVLCRIYKK (149 aa). A DNA-binding region spans residues 111-168; it reads VGIKKALVFYIGKAPKGTKTNWIMHEYRLIEPSRRNGSTKLDDWVLCRIYKKQTSAQK.

In terms of tissue distribution, expressed in leaves.

It localises to the nucleus. Transcription factors that bind specifically to the 5'-CATGTG-3' motif. This is NAC domain-containing protein 55 (NAC055) from Arabidopsis thaliana (Mouse-ear cress).